A 202-amino-acid polypeptide reads, in one-letter code: Small ribosomal subunit protein uS4 (202 aa).

The region spanning 91 to 168 (SRLSSILYNS…HKVPDYLEVD (78 aa)) is the S4 RNA-binding domain.

This sequence belongs to the universal ribosomal protein uS4 family. Part of the 30S ribosomal subunit. Contacts protein S5. The interaction surface between S4 and S5 is involved in control of translational fidelity.

Functionally, one of the primary rRNA binding proteins, it binds directly to 16S rRNA where it nucleates assembly of the body of the 30S subunit. With S5 and S12 plays an important role in translational accuracy. The protein is Small ribosomal subunit protein uS4 of Ehrlichia canis (strain Jake).